A 448-amino-acid chain; its full sequence is Asparagine--tRNA ligase (448 aa).

Belongs to the class-II aminoacyl-tRNA synthetase family. In terms of assembly, homodimer.

The protein resides in the cytoplasm. The catalysed reaction is tRNA(Asn) + L-asparagine + ATP = L-asparaginyl-tRNA(Asn) + AMP + diphosphate + H(+). This chain is Asparagine--tRNA ligase, found in Streptococcus thermophilus (strain ATCC BAA-491 / LMD-9).